The primary structure comprises 319 residues: tRNA uridine(34) hydroxylase (319 aa).

Residues 127–221 form the Rhodanese domain; sequence KQEDTVIIDA…YGKDPEVQGE (95 aa). The Cysteine persulfide intermediate role is filled by cysteine 181.

This sequence belongs to the TrhO family.

It catalyses the reaction uridine(34) in tRNA + AH2 + O2 = 5-hydroxyuridine(34) in tRNA + A + H2O. Catalyzes oxygen-dependent 5-hydroxyuridine (ho5U) modification at position 34 in tRNAs. In Bacillus thuringiensis (strain Al Hakam), this protein is tRNA uridine(34) hydroxylase.